Here is a 313-residue protein sequence, read N- to C-terminus: Secretory carrier-associated membrane protein 4 (313 aa).

The segment at 1–69 (MAGRSRYDNP…LPPEPADFYN (69 aa)) is disordered. Residues 1-148 (MAGRSRYDNP…EIPVHLQRTQ (148 aa)) are Cytoplasmic-facing. Residues 85-116 (MKTREKELLAKEAELNRREKEIKRREEAAARA) adopt a coiled-coil conformation. Helical transmembrane passes span 149 to 169 (YVAFASLLGLVLCLFWNIICV), 181 to 201 (IWFLAVIYFILGCPGAYYLWY), 216 to 236 (FGWFFLFYLVHIAFCVYAAVS), and 255 to 275 (LIGNTVIVGVFYFLGFAMFCL). Residues 276–313 (ESLLSMWVIQRVYLYFRGSGKEAEMKREAARSAARAAF) are Cytoplasmic-facing.

Belongs to the SCAMP family.

It is found in the cell membrane. The protein localises to the cytoplasmic vesicle. The protein resides in the secretory vesicle membrane. Its function is as follows. Probably involved in membrane trafficking. This is Secretory carrier-associated membrane protein 4 (SCAMP4) from Oryza sativa subsp. japonica (Rice).